The primary structure comprises 750 residues: Photosystem I P700 chlorophyll a apoprotein A1 (750 aa).

Helical transmembrane passes span Val-70–Ala-93, Leu-156–His-179, Leu-195–Leu-219, Ile-291–Tyr-309, Trp-346–Tyr-369, Leu-385–Val-411, Ala-433–His-455, and Phe-531–Leu-549. The [4Fe-4S] cluster site is built by Cys-573 and Cys-582. A run of 2 helical transmembrane segments spans residues His-589–Trp-610 and Leu-664–Phe-686. Residue His-675 participates in chlorophyll a' binding. Chlorophyll a is bound by residues Met-683 and Tyr-691. Trp-692 is a phylloquinone binding site. A helical transmembrane segment spans residues Ala-724–Ala-744.

The protein belongs to the PsaA/PsaB family. The PsaA/B heterodimer binds the P700 chlorophyll special pair and subsequent electron acceptors. PSI consists of a core antenna complex that captures photons, and an electron transfer chain that converts photonic excitation into a charge separation. The eukaryotic PSI reaction center is composed of at least 11 subunits. P700 is a chlorophyll a/chlorophyll a' dimer, A0 is one or more chlorophyll a, A1 is one or both phylloquinones and FX is a shared 4Fe-4S iron-sulfur center. is required as a cofactor.

Its subcellular location is the plastid. The protein resides in the chloroplast thylakoid membrane. The catalysed reaction is reduced [plastocyanin] + hnu + oxidized [2Fe-2S]-[ferredoxin] = oxidized [plastocyanin] + reduced [2Fe-2S]-[ferredoxin]. Its function is as follows. PsaA and PsaB bind P700, the primary electron donor of photosystem I (PSI), as well as the electron acceptors A0, A1 and FX. PSI is a plastocyanin-ferredoxin oxidoreductase, converting photonic excitation into a charge separation, which transfers an electron from the donor P700 chlorophyll pair to the spectroscopically characterized acceptors A0, A1, FX, FA and FB in turn. Oxidized P700 is reduced on the lumenal side of the thylakoid membrane by plastocyanin. This chain is Photosystem I P700 chlorophyll a apoprotein A1, found in Populus trichocarpa (Western balsam poplar).